The following is a 117-amino-acid chain: UPF0295 protein Bsph_0336 (117 aa).

Transmembrane regions (helical) follow at residues 13 to 33 and 37 to 57; these read SFAL…IFFK and ILVL…TVVY.

Belongs to the UPF0295 family.

The protein localises to the cell membrane. The chain is UPF0295 protein Bsph_0336 from Lysinibacillus sphaericus (strain C3-41).